The following is a 347-amino-acid chain: NADH-ubiquinone oxidoreductase chain 2 (347 aa).

Transmembrane regions (helical) follow at residues 13-33, 60-80, 96-116, 123-143, 149-169, 178-198, 201-221, 247-267, 274-294, and 326-346; these read IFTG…WVGL, FLTQ…NSML, LMIM…FWVP, PLMS…SIMY, LNVN…SWGG, ILAY…PYNP, TILN…LLNL, TLLS…WVII, NSLI…YFYL, and LPTL…MLMI.

This sequence belongs to the complex I subunit 2 family. Core subunit of respiratory chain NADH dehydrogenase (Complex I) which is composed of 45 different subunits. Interacts with TMEM242.

The protein localises to the mitochondrion inner membrane. It carries out the reaction a ubiquinone + NADH + 5 H(+)(in) = a ubiquinol + NAD(+) + 4 H(+)(out). Core subunit of the mitochondrial membrane respiratory chain NADH dehydrogenase (Complex I) which catalyzes electron transfer from NADH through the respiratory chain, using ubiquinone as an electron acceptor. Essential for the catalytic activity and assembly of complex I. The sequence is that of NADH-ubiquinone oxidoreductase chain 2 from Pan troglodytes (Chimpanzee).